Here is a 219-residue protein sequence, read N- to C-terminus: 7-cyano-7-deazaguanine synthase (219 aa).

10–20 (FSGGQDSTTCL) is a binding site for ATP. Zn(2+)-binding residues include cysteine 188, cysteine 197, cysteine 200, and cysteine 203.

This sequence belongs to the QueC family. As to quaternary structure, homodimer. It depends on Zn(2+) as a cofactor.

The catalysed reaction is 7-carboxy-7-deazaguanine + NH4(+) + ATP = 7-cyano-7-deazaguanine + ADP + phosphate + H2O + H(+). The protein operates within purine metabolism; 7-cyano-7-deazaguanine biosynthesis. Its function is as follows. Catalyzes the ATP-dependent conversion of 7-carboxy-7-deazaguanine (CDG) to 7-cyano-7-deazaguanine (preQ(0)). The protein is 7-cyano-7-deazaguanine synthase of Clostridium botulinum (strain Langeland / NCTC 10281 / Type F).